A 629-amino-acid polypeptide reads, in one-letter code: DNA-directed RNA polymerase subunit beta' (629 aa).

Residues Cys70, Cys72, Cys85, and Cys88 each contribute to the Zn(2+) site. The Mg(2+) site is built by Asp472, Asp474, and Asp476.

Belongs to the RNA polymerase beta' chain family. RpoC1 subfamily. As to quaternary structure, in plastids the minimal PEP RNA polymerase catalytic core is composed of four subunits: alpha, beta, beta', and beta''. When a (nuclear-encoded) sigma factor is associated with the core the holoenzyme is formed, which can initiate transcription. Mg(2+) is required as a cofactor. Zn(2+) serves as cofactor.

It is found in the plastid. It localises to the chloroplast. The catalysed reaction is RNA(n) + a ribonucleoside 5'-triphosphate = RNA(n+1) + diphosphate. DNA-dependent RNA polymerase catalyzes the transcription of DNA into RNA using the four ribonucleoside triphosphates as substrates. The polypeptide is DNA-directed RNA polymerase subunit beta' (Porphyra purpurea (Red seaweed)).